The primary structure comprises 188 residues: MSIKSDKWIRRMSEEFGMIDPFEPNQIKEADGKRIISYGTSSYGYDIRCANEFKIFTNINSTIVDPKNFDPKNFVTVEDDCCIIPPNSFALARTVEYFRIPRNVLTVCLGKSTYARCGIIVNVTPFEPEWEGYVTLEFSNTTPLPAKIYAGEGVAQVLFFESDEICETSYKDRNGKYMGQTGVTLPKA.

DCTP-binding positions include 111–116, 135–137, Gln-156, Tyr-170, and Gln-180; these read KSTYAR and TLE. Residue Glu-137 is the Proton donor/acceptor of the active site.

The protein belongs to the dCTP deaminase family. As to quaternary structure, homotrimer.

The catalysed reaction is dCTP + H2O + H(+) = dUTP + NH4(+). It participates in pyrimidine metabolism; dUMP biosynthesis; dUMP from dCTP (dUTP route): step 1/2. Functionally, catalyzes the deamination of dCTP to dUTP. The chain is dCTP deaminase from Neisseria meningitidis serogroup B (strain ATCC BAA-335 / MC58).